The sequence spans 414 residues: Calcium/calmodulin-dependent protein kinase cmkA (414 aa).

The Protein kinase domain occupies Tyr-23 to Leu-278. ATP-binding positions include Leu-29–Val-37 and Lys-50. Asp-142 functions as the Proton acceptor in the catalytic mechanism. The segment at Leu-278 to Ile-314 is autoinhibitory domain. A calmodulin-binding region spans residues Arg-293–Glu-315. Disordered stretches follow at residues Gln-320–Leu-375 and Glu-394–Ser-414. The segment covering Ser-351 to Asn-364 has biased composition (polar residues).

The protein belongs to the protein kinase superfamily. CAMK Ser/Thr protein kinase family. CaMK subfamily. Monomer. In terms of processing, autophosphorylated in a calcium/calmodulin-dependent manner.

The catalysed reaction is L-seryl-[protein] + ATP = O-phospho-L-seryl-[protein] + ADP + H(+). It catalyses the reaction L-threonyl-[protein] + ATP = O-phospho-L-threonyl-[protein] + ADP + H(+). Activated by Ca(2+)/calmodulin. Binding of calmodulin may relieve intrasteric autoinhibition. Functionally, calcium/calmodulin-dependent protein kinase. Required in nuclear division cycle for progression from G2 to mitosis. Required for hyphal growth. The polypeptide is Calcium/calmodulin-dependent protein kinase cmkA (cmkA) (Emericella nidulans (strain FGSC A4 / ATCC 38163 / CBS 112.46 / NRRL 194 / M139) (Aspergillus nidulans)).